The sequence spans 1342 residues: DNA-directed RNA polymerase subunit beta (1342 aa).

This sequence belongs to the RNA polymerase beta chain family. The RNAP catalytic core consists of 2 alpha, 1 beta, 1 beta' and 1 omega subunit. When a sigma factor is associated with the core the holoenzyme is formed, which can initiate transcription.

The enzyme catalyses RNA(n) + a ribonucleoside 5'-triphosphate = RNA(n+1) + diphosphate. Its function is as follows. DNA-dependent RNA polymerase catalyzes the transcription of DNA into RNA using the four ribonucleoside triphosphates as substrates. This is DNA-directed RNA polymerase subunit beta from Salmonella typhimurium (strain LT2 / SGSC1412 / ATCC 700720).